The following is a 924-amino-acid chain: Exocyst complex component 2 (924 aa).

One can recognise an IPT/TIG domain in the interval 8–93 (PLVTGISPNE…GTSTVSFKLL (86 aa)). Positions 240-260 (QKLENVLNRASNTADTLFQEV) form a coiled coil. Residues Ser-431, Ser-432, and Ser-435 each carry the phosphoserine modification. Thr-440 carries the phosphothreonine modification. An N6-acetyllysine modification is found at Lys-454. Ser-888 carries the phosphoserine modification.

Belongs to the SEC5 family. The exocyst complex is composed of EXOC1, EXOC2, EXOC3, EXOC4, EXOC5, EXOC6, EXOC7 and EXOC8. Interacts with EXOC3L1. Interacts with GNEFR/DELGEF; this interaction occurs only in the presence of magnesium or manganese and is stimulated by dCTP or GTP. Interacts with RALA and RALB. Interacts with ARL13B; regulates ARL13B localization to the cilium membrane. As to expression, widely expressed with highest levels in brain and placenta.

The protein localises to the midbody. It is found in the midbody ring. Its function is as follows. Component of the exocyst complex involved in the docking of exocytic vesicles with fusion sites on the plasma membrane. This Homo sapiens (Human) protein is Exocyst complex component 2 (EXOC2).